The chain runs to 99 residues: Putative septation protein SpoVG (99 aa).

Belongs to the SpoVG family.

Functionally, could be involved in septation. In Aster yellows witches'-broom phytoplasma (strain AYWB), this protein is Putative septation protein SpoVG.